We begin with the raw amino-acid sequence, 325 residues long: Small ribosomal subunit protein RACK1 (325 aa).

WD repeat units lie at residues 13–44, 61–91, 103–133, 147–179, 191–221, 232–261, and 291–321; these read AHTD…ILWH, GHSH…RLWD, GHTK…KLWN, AHSD…KVWN, GHSG…LLWD, DAGS…KIWD, and KKVI…RVWG.

This sequence belongs to the WD repeat G protein beta family. Ribosomal protein RACK1 subfamily.

Its function is as follows. Plays a role in hormone-mediated cell division. The chain is Small ribosomal subunit protein RACK1 (GB1) from Medicago sativa (Alfalfa).